A 194-amino-acid chain; its full sequence is Large ribosomal subunit protein bL25 (194 aa).

It belongs to the bacterial ribosomal protein bL25 family. CTC subfamily. As to quaternary structure, part of the 50S ribosomal subunit; part of the 5S rRNA/L5/L18/L25 subcomplex. Contacts the 5S rRNA. Binds to the 5S rRNA independently of L5 and L18.

This is one of the proteins that binds to the 5S RNA in the ribosome where it forms part of the central protuberance. This chain is Large ribosomal subunit protein bL25, found in Geobacter sulfurreducens (strain ATCC 51573 / DSM 12127 / PCA).